We begin with the raw amino-acid sequence, 68 residues long: Conotoxin TsMMSK-021 (68 aa).

The first 20 residues, 1–20 (MMSKLGVLLTICLLLFPLTA), serve as a signal peptide directing secretion. Residues 21–52 (VRLDGDQHTDRPADRMQDIATEQHPLFDPVKR) constitute a propeptide that is removed on maturation. 3 disulfides stabilise this stretch: Cys-53–Cys-66, Cys-54–Cys-62, and Cys-58–Cys-65. Position 64 is a 4-hydroxyproline (Pro-64).

Belongs to the conotoxin M superfamily. As to expression, expressed by the venom duct.

It localises to the secreted. The chain is Conotoxin TsMMSK-021 from Conus tessulatus (Tessellate cone).